The sequence spans 1578 residues: Bromodomain-containing protein DDB_G0270170 (1578 aa).

Residues 1–12 show a composition bias toward acidic residues; sequence MSLEQQDETVVE. 4 disordered regions span residues 1-39, 108-127, 151-285, and 319-454; these read MSLEQQDETVVEEETKTSFETNNSTANNTNNNTDNTYKE, NNNNGDENNKDIHDSSNNTE, HYSD…AKEL, and NENI…TTQT. Positions 18–35 are enriched in low complexity; sequence SFETNNSTANNTNNNTDN. The span at 152–163 shows a compositional bias: basic and acidic residues; the sequence is YSDDESSKEKQD. Composition is skewed to low complexity over residues 164 to 185 and 197 to 231; these read NINSNNNNNKNKNEQIINSENI and TTPSDTPPTLTNNTSSTTTTTTTNNTTTAATTTTN. 2 stretches are compositionally biased toward polar residues: residues 319–332 and 340–351; these read NENIFSSSRKSTTK and TASTTNTPIITA. A compositionally biased stretch (low complexity) spans 352-383; sequence QQNTTPLSPTQTTTTTTTPTTTTAQQNTPAQT. Residues 384 to 395 show a composition bias toward polar residues; that stretch reads ESKPPTTISINI. Low complexity-rich tracts occupy residues 396–407 and 417–433; these read KGSKSPKTTGGK and VVISQPVVPSTPVVATT. The segment covering 443-454 has biased composition (polar residues); the sequence is STANNNSETTQT. A coiled-coil region spans residues 479–506; it reads SDSATIQQLQQSISMLEDKIRLISSNNK. Disordered stretches follow at residues 543–565 and 580–730; these read FTKSSTLAPPSSERKYSNLYSDD and IPIP…RMGK. 2 stretches are compositionally biased toward low complexity: residues 604–653 and 660–686; these read NTST…PPQQ and TQQENTSSTTTTTTTTTTTTNTEDTTT. Positions 735 to 841 constitute a Bromo domain; it reads VVLTPVFKRC…DVFEKGFPKV (107 aa). The stretch at 851–903 forms a coiled coil; sequence KNVDQEKIEKLSNDLKNVTKELEKFKKDDSNSINNNNNNNNNYNNNNNNNNNN. 4 disordered regions span residues 874-969, 1039-1167, 1184-1452, and 1480-1544; these read KFKK…KVTT, HALP…NNNN, SIPE…TDSA, and EREE…KGNM. Composition is skewed to low complexity over residues 881–911, 918–961, and 1047–1061; these read NSINNNNNNNNNYNNNNNNNNNNSSSSSSRS, SSGS…SSNN, and SSTHSSHSSSHDSSS. Residues 957–1039 enclose the NET domain; the sequence is SSSNNKKYPK…QYKNGEIPQH (83 aa). Over residues 1064–1077 the composition is skewed to basic and acidic residues; it reads REIEKLQKQLDRLG. Basic residues predominate over residues 1092 to 1107; it reads HSKRISKPISKARGRK. Low complexity predominate over residues 1112 to 1167; the sequence is SSSNLNNSSNNINNNNNNINNYNNNNNYNNNNNNNLNNNNNNNINSNLNNNLNNNN. Residues 1113–1150 adopt a coiled-coil conformation; that stretch reads SSNLNNSSNNINNNNNNINNYNNNNNYNNNNNNNLNNN. Residues 1192–1204 are compositionally biased toward acidic residues; the sequence is TDISESSDSESDS. Composition is skewed to low complexity over residues 1205 to 1218 and 1231 to 1334; these read ESGSSDSSSSYSDS and YNNS…SLTN. Residues 1280-1308 are a coiled coil; that stretch reads NSNNNNSNNNNNNVNNNNNNHNNNNHNNN. The segment covering 1356–1369 has biased composition (polar residues); sequence SVASWSFDPTNNKE. The segment covering 1370-1386 has biased composition (low complexity); the sequence is SSSSSSTSSTSSTSNTT. Residues 1387-1399 show a composition bias toward polar residues; that stretch reads LTPIIQQSSLTHA. Composition is skewed to low complexity over residues 1400–1424 and 1432–1451; these read SSPISSSTFVSFSSSSSTPPTNNLS and NSPSINSPSSPSANNNNTDS. A coiled-coil region spans residues 1462-1544; sequence TLKQKEKERV…EKLNNSKGNM (83 aa). A compositionally biased stretch (basic and acidic residues) spans 1480 to 1538; the sequence is EREEKEEELKKEEEKKRIEMEEIKRLAKEKEEREAEETRKQIESERAAAREAREKEKLN.

This Dictyostelium discoideum (Social amoeba) protein is Bromodomain-containing protein DDB_G0270170.